The following is a 540-amino-acid chain: Cobalt-factor III methyltransferase (540 aa).

[4Fe-4S] cluster contacts are provided by Cys402, Cys405, Cys439, and Cys443.

The protein in the N-terminal section; belongs to the precorrin methyltransferase family. [4Fe-4S] cluster serves as cofactor.

It carries out the reaction Co(II)-factor III + AH2 + S-adenosyl-L-methionine = Co-precorrin-4 + A + S-adenosyl-L-homocysteine. The protein operates within cofactor biosynthesis; adenosylcobalamin biosynthesis. Functionally, methyltransferase that catalyzes the reduction, ring contraction and methylation of C-17 in cobalt-factor III to form cobalt-precorrin-4. Is also able to convert cobalt-precorrin-3 to cobalt-precorrin-4. This Priestia megaterium (Bacillus megaterium) protein is Cobalt-factor III methyltransferase (cbiH60).